A 114-amino-acid chain; its full sequence is Large ribosomal subunit protein bL17 (114 aa).

It belongs to the bacterial ribosomal protein bL17 family. In terms of assembly, part of the 50S ribosomal subunit. Contacts protein L32.

This chain is Large ribosomal subunit protein bL17, found in Elusimicrobium minutum (strain Pei191).